A 628-amino-acid polypeptide reads, in one-letter code: DNA mismatch repair protein MutL (628 aa).

The disordered stretch occupies residues G350–K402. The segment covering S356 to G368 has biased composition (polar residues). The span at K369–K393 shows a compositional bias: basic and acidic residues.

Belongs to the DNA mismatch repair MutL/HexB family.

Functionally, this protein is involved in the repair of mismatches in DNA. It is required for dam-dependent methyl-directed DNA mismatch repair. May act as a 'molecular matchmaker', a protein that promotes the formation of a stable complex between two or more DNA-binding proteins in an ATP-dependent manner without itself being part of a final effector complex. The protein is DNA mismatch repair protein MutL of Wolbachia sp. subsp. Brugia malayi (strain TRS).